Reading from the N-terminus, the 370-residue chain is 3,7-dimethylxanthine N-methyltransferase CkTbS (370 aa).

Y24 is an S-adenosyl-L-homocysteine binding site. Residue T31 participates in theobromine binding. Residues C67, N72, D104, L105, S139, and F140 each contribute to the S-adenosyl-L-homocysteine site. Y157, H160, and W161 together coordinate theobromine. N178 is a binding site for Mg(2+). H226 is a theobromine binding site. Residues D264, F266, and N267 each coordinate Mg(2+). Residue F322 participates in theobromine binding.

It belongs to the methyltransferase superfamily. Type-7 methyltransferase family. It depends on Mg(2+) as a cofactor.

It catalyses the reaction 7-methylxanthine + S-adenosyl-L-methionine = theobromine + S-adenosyl-L-homocysteine + H(+). It functions in the pathway alkaloid biosynthesis. Involved in the biosynthesis of caffeine in cv. Puer. Involved in the biosynthesis of theacrine in cv. Kucha, a caffeine-like xanthine alkaloid with diverse beneficial biological activities including anti-depressive, sedative, and hypnotic activities, improving learning and memory, increasing exercise activity, and preventing nonalcoholic fatty liver disease. Catalyzes the conversion of 7-methylxanthine (7mX) to theobromine but not able to convert paraxanthine to caffeine. This Camellia sinensis var. assamica (Assam tea) protein is 3,7-dimethylxanthine N-methyltransferase CkTbS.